Reading from the N-terminus, the 557-residue chain is Protein PNS1 (557 aa).

The segment at 1–58 is disordered; sequence MSTEKQYQPQQPPPAYTGQGPDNGNAYGYPESYGKTETHSGDSCSGDTSMNPQQQGQQ. Residues 1–99 are Cytoplasmic-facing; that stretch reads MSTEKQYQPQ…DNNKPKFNDW (99 aa). Polar residues predominate over residues 41–58; that stretch reads GDSCSGDTSMNPQQQGQQ. Residues 100–120 form a helical membrane-spanning segment; that stretch reads PFIIVFLLTLCGFIVVASLTL. Residues 121-147 are Extracellular-facing; the sequence is RAWSQTYSSTGSGIYHDFDTGTLNTNS. Residues 148 to 168 form a helical membrane-spanning segment; sequence VILLVFSVVIAIFFAFIGIVL. Residues 169–174 lie on the Cytoplasmic side of the membrane; that stretch reads CRAYPK. Residues 175–195 form a helical membrane-spanning segment; that stretch reads FFIYAGMIVNILAALGTAIMY. The Extracellular portion of the chain corresponds to 196-200; sequence MSLKY. A helical transmembrane segment spans residues 201–221; the sequence is WSAGIVFLIFTFMTAWCYWGM. At 222-246 the chain is on the cytoplasmic side; it reads RSRIPLTVAILRVIVLAMKNCPQSL. Residues 247-267 traverse the membrane as a helical segment; sequence FVSFFGTIVASAFAMLFSTVV. Residues 268–292 are Extracellular-facing; sequence VATYMKYDPSNTNSGCNVSGGDCSH. N-linked (GlcNAc...) asparagine glycosylation occurs at Asn284. Residues 293-313 form a helical membrane-spanning segment; that stretch reads AKLIGVLVVVFFCGYYISEVI. The Cytoplasmic portion of the chain corresponds to 314-350; the sequence is RNVMHCTVSGVFGSWYYRYKSDQGMPKWPAMGAFKRA. The helical transmembrane segment at 351–371 threads the bilayer; the sequence is MTYSFGSICFGSLIVSIIETF. Residues 372 to 393 lie on the Extracellular side of the membrane; it reads RQLLQLGKQAAIASTDNANWIR. The helical transmembrane segment at 394-414 threads the bilayer; it reads IIFWLIDMLVGFIQWIAQYFN. At 415-454 the chain is on the cytoplasmic side; it reads HYAYCIIALYGKPYLKAAKQTWYMFREKGIDALINDNLVN. The helical transmembrane segment at 455–475 threads the bilayer; that stretch reads VALGFYSLFASYMSCLFAFLY. The Extracellular segment spans residues 476 to 488; sequence LRFTKPGYNSDGD. The helical transmembrane segment at 489-509 threads the bilayer; that stretch reads FNAPLMAFAFVIALQLTNIAN. Topologically, residues 510–557 are cytoplasmic; that stretch reads ETIRSGCATFFTALGHDPEVFQAQYPDRFDEIFRSYPQVLNKLTHQDV.

This sequence belongs to the CTL (choline transporter-like) family.

It localises to the cell membrane. In terms of biological role, probably involved in transport through the plasma membrane. The protein is Protein PNS1 (PNS1) of Candida glabrata (strain ATCC 2001 / BCRC 20586 / JCM 3761 / NBRC 0622 / NRRL Y-65 / CBS 138) (Yeast).